Reading from the N-terminus, the 309-residue chain is Homoserine kinase (309 aa).

Pro-91 to Cys-101 lines the ATP pocket.

This sequence belongs to the GHMP kinase family. Homoserine kinase subfamily.

It is found in the cytoplasm. It catalyses the reaction L-homoserine + ATP = O-phospho-L-homoserine + ADP + H(+). It functions in the pathway amino-acid biosynthesis; L-threonine biosynthesis; L-threonine from L-aspartate: step 4/5. Catalyzes the ATP-dependent phosphorylation of L-homoserine to L-homoserine phosphate. The protein is Homoserine kinase of Klebsiella pneumoniae subsp. pneumoniae (strain ATCC 700721 / MGH 78578).